The primary structure comprises 420 residues: MKTLIARHKAGEHIGICSVCSAHPLVIEAALAFDRNSTRKVLIEATSNQVNQFGGYTGMTPADFREFVFAIADKVGFARERIILGGDHLGPNCWQQENVDAAMEKSVELVKAYVRAGFSKIHLDASMSCAGDPIPLAPETVAERAAVLCFAAESVATDCQREQLSYVIGTEVPVPGGEASAIQSVHITHVEDAANTLRTHQKAFIARGLTEALTRVIAIVVQPGVEFDHSNIIHYQPQEAQALAQWIENTRMVYEAHSTDYQTRTAYWELVRDHFAILKVGPALTFALREAIFALAQIEQELIAPENRSGCLAVIEEVMLDEPQYWKKYYRTGFNDSLLDIRYSLSDRIRYYWPHSRIKNSVETMMVNLQGVDIPLGMISQYLPKQFERIQSGELSAIPHQLIMDKIYDVLRAYRYGCAE.

Belongs to the GatZ/KbaZ family. GatZ subfamily. In terms of assembly, forms a complex with GatY.

It participates in carbohydrate metabolism; D-tagatose 6-phosphate degradation; D-glyceraldehyde 3-phosphate and glycerone phosphate from D-tagatose 6-phosphate: step 2/2. Component of the tagatose-1,6-bisphosphate aldolase GatYZ that is required for full activity and stability of the Y subunit. Could have a chaperone-like function for the proper and stable folding of GatY. When expressed alone, GatZ does not show any aldolase activity. Is involved in the catabolism of galactitol. This chain is D-tagatose-1,6-bisphosphate aldolase subunit GatZ (gatZ), found in Escherichia coli O157:H7.